Here is a 115-residue protein sequence, read N- to C-terminus: SOSS complex subunit C homolog (115 aa).

This sequence belongs to the SOSS-C family.

The polypeptide is SOSS complex subunit C homolog (Drosophila grimshawi (Hawaiian fruit fly)).